Reading from the N-terminus, the 455-residue chain is Secreted triacylglycerol lipase LIP4 (455 aa).

Residues 1–19 (MKLNLFILGLLTLAAHAYA) form the signal peptide. An N-linked (GlcNAc...) asparagine glycan is attached at Asn98. Cys115 and Cys284 form a disulfide bridge. Ser197 acts as the Nucleophile in catalysis. Asn230 is a glycosylation site (N-linked (GlcNAc...) asparagine). Active-site residues include Asp344 and His378. Cys360 and Cys406 form a disulfide bridge.

It belongs to the AB hydrolase superfamily. Lipase family. Class Lip subfamily.

It is found in the secreted. The protein resides in the cell wall. The enzyme catalyses a triacylglycerol + H2O = a diacylglycerol + a fatty acid + H(+). The catalysed reaction is a monoacylglycerol + H2O = glycerol + a fatty acid + H(+). It catalyses the reaction a diacylglycerol + H2O = a monoacylglycerol + a fatty acid + H(+). Its function is as follows. Secreted lipase involved in Dandruff and seborrheic dermatitis (D/SD) probably via lipase-mediated breakdown of sebaceous lipids and release of irritating free fatty acids. Has triacylglycerol lipase activity and is able to hydrolyze triolein. Mostly converts monoolein to di- and triolein, while free fatty acids are only produced in low amounts. In Malassezia globosa (strain ATCC MYA-4612 / CBS 7966) (Dandruff-associated fungus), this protein is Secreted triacylglycerol lipase LIP4.